A 341-amino-acid polypeptide reads, in one-letter code: Ketol-acid reductoisomerase (NADP(+)) (341 aa).

In terms of domain architecture, KARI N-terminal Rossmann spans 2–182; that stretch reads AKIYYNDDAD…GGTRAGVIET (181 aa). NADP(+) contacts are provided by residues 25–28, S51, S53, and 83–86; these read YGSQ and DQVQ. H108 is an active-site residue. G134 is a binding site for NADP(+). A KARI C-terminal knotted domain is found at 183–328; the sequence is TFTEETESDL…RKLRSLFAWE (146 aa). Residues D191, E195, E227, and E231 each coordinate Mg(2+). S252 is a binding site for substrate.

Belongs to the ketol-acid reductoisomerase family. The cofactor is Mg(2+).

The catalysed reaction is (2R)-2,3-dihydroxy-3-methylbutanoate + NADP(+) = (2S)-2-acetolactate + NADPH + H(+). It carries out the reaction (2R,3R)-2,3-dihydroxy-3-methylpentanoate + NADP(+) = (S)-2-ethyl-2-hydroxy-3-oxobutanoate + NADPH + H(+). The protein operates within amino-acid biosynthesis; L-isoleucine biosynthesis; L-isoleucine from 2-oxobutanoate: step 2/4. Its pathway is amino-acid biosynthesis; L-valine biosynthesis; L-valine from pyruvate: step 2/4. Its function is as follows. Involved in the biosynthesis of branched-chain amino acids (BCAA). Catalyzes an alkyl-migration followed by a ketol-acid reduction of (S)-2-acetolactate (S2AL) to yield (R)-2,3-dihydroxy-isovalerate. In the isomerase reaction, S2AL is rearranged via a Mg-dependent methyl migration to produce 3-hydroxy-3-methyl-2-ketobutyrate (HMKB). In the reductase reaction, this 2-ketoacid undergoes a metal-dependent reduction by NADPH to yield (R)-2,3-dihydroxy-isovalerate. In Kocuria rhizophila (strain ATCC 9341 / DSM 348 / NBRC 103217 / DC2201), this protein is Ketol-acid reductoisomerase (NADP(+)).